We begin with the raw amino-acid sequence, 298 residues long: Protoheme IX farnesyltransferase (298 aa).

9 consecutive transmembrane segments (helical) span residues 16-36, 45-65, 93-113, 114-134, 141-161, 172-192, 223-243, 244-264, and 277-297; these read VVAL…PDMP, ALGF…NQLL, VFAG…VNVI, TAVL…VYLK, IVIG…AVTG, SLLV…LAIF, VLLA…VFYL, GGAI…LNPP, and IVYL…LPWV.

Belongs to the UbiA prenyltransferase family. Protoheme IX farnesyltransferase subfamily.

It localises to the cell inner membrane. The enzyme catalyses heme b + (2E,6E)-farnesyl diphosphate + H2O = Fe(II)-heme o + diphosphate. It participates in porphyrin-containing compound metabolism; heme O biosynthesis; heme O from protoheme: step 1/1. In terms of biological role, converts heme B (protoheme IX) to heme O by substitution of the vinyl group on carbon 2 of heme B porphyrin ring with a hydroxyethyl farnesyl side group. The protein is Protoheme IX farnesyltransferase of Xanthomonas euvesicatoria pv. vesicatoria (strain 85-10) (Xanthomonas campestris pv. vesicatoria).